A 130-amino-acid chain; its full sequence is Small ribosomal subunit protein uS8B (130 aa).

It belongs to the universal ribosomal protein uS8 family.

This Drosophila melanogaster (Fruit fly) protein is Small ribosomal subunit protein uS8B (RpS15Ab).